Here is an 807-residue protein sequence, read N- to C-terminus: 1-phosphatidylinositol 4,5-bisphosphate phosphodiesterase delta-4 (807 aa).

Residues 16 to 124 (LLMQEGTMMR…WMRGLQLLVD (109 aa)) enclose the PH domain. Residues 26–53 (KVRTKSWKKLRYFRLQNDGMTVWHGSQP) are substrate binding. EF-hand domains are found at residues 134-169 (QMDQ…MNVE), 170-205 (MDEE…LTKR), and 203-237 (TKRT…EQKE). The Ca(2+) site is built by Asp147, Asn149, Asp151, Arg153, Glu158, Asp183, Ser187, Asp189, and Glu194. The GBA motif lies at 213-243 (EDFSSDKQKLTLLEFVDFLRKEQKEKDHAPD). The 146-residue stretch at 290-435 (QDMTQPLSHY…LRGKILVKGK (146 aa)) folds into the PI-PLC X-box domain. Residue His305 is part of the active site. Asn306, Glu335, and Asp337 together coordinate Ca(2+). Residue His350 is part of the active site. Glu384 provides a ligand contact to Ca(2+). 2 residues coordinate substrate: Lys433 and Lys435. Positions 442 to 490 (VDKEEEEEEEEEELEKDEGPDLDPASPELDTQPQPETQGQAAGNKKERK) are disordered. Positions 443 to 462 (DKEEEEEEEEEELEKDEGPD) are enriched in acidic residues. Positions 470-482 (LDTQPQPETQGQA) are enriched in polar residues. The region spanning 538-654 (LSALVVYLRT…GYVLKPEFLR (117 aa)) is the PI-PLC Y-box domain. Residues Ser567 and Arg594 each contribute to the substrate site. The C2 domain maps to 654–781 (RDTQSSFNPE…QGYRHVSLLS (128 aa)). 4 residues coordinate Ca(2+): Asp697, Asn721, Asp750, and Tyr751. A PDZ-binding motif is present at residues 776-779 (HVSL).

As to quaternary structure, interacts with GRIP1. Interacts (via GBA motif) with guanine nucleotide-binding protein G(i) alpha subunit GNAI3 (inactive GDP-bound form)l low-affinity interaction. The cofactor is Ca(2+).

The protein localises to the membrane. The protein resides in the nucleus. It is found in the cytoplasm. Its subcellular location is the endoplasmic reticulum. The enzyme catalyses a 1,2-diacyl-sn-glycero-3-phospho-(1D-myo-inositol-4,5-bisphosphate) + H2O = 1D-myo-inositol 1,4,5-trisphosphate + a 1,2-diacyl-sn-glycerol + H(+). It carries out the reaction a 1,2-diacyl-sn-glycero-3-phospho-(1D-myo-inositol) + H2O = 1D-myo-inositol 1-phosphate + a 1,2-diacyl-sn-glycerol + H(+). Hydrolyzes the phosphatidylinositol 4,5-bisphosphate (PIP2) to generate 2 second messenger molecules diacylglycerol (DAG) and inositol 1,4,5-trisphosphate (IP3). DAG mediates the activation of protein kinase C (PKC), while IP3 releases Ca(2+) from intracellular stores. Required for acrosome reaction in sperm during fertilization, probably by acting as an important enzyme for intracellular Ca(2+) mobilization in the zona pellucida-induced acrosome reaction. May play a role in cell growth. Modulates the liver regeneration in cooperation with nuclear PKC. Overexpression up-regulates the Erk signaling pathway and proliferation. This chain is 1-phosphatidylinositol 4,5-bisphosphate phosphodiesterase delta-4, found in Mus musculus (Mouse).